Consider the following 307-residue polypeptide: Quinolinate synthase (307 aa).

Iminosuccinate contacts are provided by histidine 20 and serine 37. Cysteine 82 is a binding site for [4Fe-4S] cluster. Iminosuccinate contacts are provided by residues 108–110 (YIN) and serine 125. Cysteine 168 serves as a coordination point for [4Fe-4S] cluster. Residues 194–196 (HPE) and threonine 219 contribute to the iminosuccinate site. Cysteine 264 contributes to the [4Fe-4S] cluster binding site.

The protein belongs to the quinolinate synthase family. Type 2 subfamily. [4Fe-4S] cluster serves as cofactor.

Its subcellular location is the cytoplasm. It catalyses the reaction iminosuccinate + dihydroxyacetone phosphate = quinolinate + phosphate + 2 H2O + H(+). The protein operates within cofactor biosynthesis; NAD(+) biosynthesis; quinolinate from iminoaspartate: step 1/1. Its function is as follows. Catalyzes the condensation of iminoaspartate with dihydroxyacetone phosphate to form quinolinate. The protein is Quinolinate synthase of Pyrobaculum aerophilum (strain ATCC 51768 / DSM 7523 / JCM 9630 / CIP 104966 / NBRC 100827 / IM2).